A 336-amino-acid polypeptide reads, in one-letter code: Polyadenylate-binding protein-interacting protein 12 (336 aa).

Residues 14–47 form a disordered region; sequence EAGGLISPSPPSSVTSQESGASSNNDHGGNGIHD. Positions 25 to 40 are enriched in polar residues; that stretch reads SSVTSQESGASSNNDH. Residues 75–85 carry the PAM2-like motif; sequence KLNPMAKEFIP. The short motif at 122–134 is the Bipartite nuclear localization signal element; the sequence is RRKKSFGQQGKRR. 2 consecutive RRM domains span residues 150-225 and 247-323; these read RTVY…PSKT and RTIY…PSKT.

As to quaternary structure, interacts with MPC. Expressed in roots, leaves, stems, flowers and siliques. Detected in flowers only in growing organs: gynoecium, petals, stamenal filaments, anther walls and ovules.

The protein localises to the nucleus. Functionally, binds nucleotic acids in vitro. This is Polyadenylate-binding protein-interacting protein 12 (CID12) from Arabidopsis thaliana (Mouse-ear cress).